Consider the following 96-residue polypeptide: C-C motif chemokine 20 (96 aa).

Positions methionine 1–alanine 26 are cleaved as a signal peptide. Cystine bridges form between cysteine 31–cysteine 58 and cysteine 32–cysteine 74.

Belongs to the intercrine beta (chemokine CC) family. As to expression, low levels in thymus and lung.

The protein resides in the secreted. Its function is as follows. Acts as a ligand for C-C chemokine receptor CCR6. Signals through binding and activation of CCR6 and induces a strong chemotactic response and mobilization of intracellular calcium ions. The ligand-receptor pair CCL20-CCR6 is responsible for the chemotaxis of dendritic cells (DC), effector/memory T-cells and B-cells and plays an important role at skin and mucosal surfaces under homeostatic and inflammatory conditions, as well as in pathology, including cancer and autoimmune diseases. CCL20 acts as a chemotactic factor that attracts lymphocytes and, slightly, neutrophils, but not monocytes. Involved in the recruitment of both the pro-inflammatory IL17 producing helper T-cells (Th17) and the regulatory T-cells (Treg) to sites of inflammation. Required for optimal migration of thymic natural regulatory T cells (nTregs) and DN1 early thymocyte progenitor cells. Positively regulates sperm motility and chemotaxis via its binding to CCR6 which triggers Ca2+ mobilization in the sperm which is important for its motility. May be involved in formation and function of the mucosal lymphoid tissues by attracting lymphocytes and dendritic cells towards epithelial cells. The chain is C-C motif chemokine 20 (Ccl20) from Rattus norvegicus (Rat).